We begin with the raw amino-acid sequence, 642 residues long: MVDISLIIGGPQGGGIESAGQIAIKSMVLLGYEVLGSREYHSNIMGAHSYYHLRVQQHRPRSLKLPVDGVLALDAESVFTHFRDVRPGGILVYDPGTKSTRVDAIQPMAGPLKKRLKSLFDSRGMQPVVESAVKLAEEAGARIVGLPLKEMLKTLSERTGAPVARVSRALNTLGLASMLYMLGVPVEYIEKAISLQFAGKEKVINMNVEAVRIAVDYVREAFGEPESRLPPGPRRGQTMMVATGNDLVAMGKIVGGLGVITYYPITPSSDEALYVEKHSYISIDGPLAEKLGYDKIAVAIVQMEDELASINAVLGAAAAGARASTTTSGPGFSLMNEAVSLAVEAEIPVVVTLWMRAGPSTGMPTRTGQQDLLHSIFSGHGDAPKIVLASGDHVEAFYDAIKAFNWAEEFQTPVIHLLDKYLASSMVSLAREDLDPSKVPITRGKLLDNPPADYRRYEVVEDGISPRARLGSATMVITGLEHDEYGYATEDPVMREIMMFKRERKFKVIEERIPDEEKAVLHGDSEASVALVSFGSTKQPILEALEMLRDEGVRARFAQVRLLYPFPGRLVEEMLEGVEKVIMVEQNLLGQLAMLLRAHTSIKPDSSIVKINGRPLYSFEVAGAVKRILETGEERVVVSHGS.

Positions 263–267 match the YPITP motif motif; it reads YPITP. Substrate is bound by residues Thr-266 and Arg-356.

As to quaternary structure, heterodimer composed of an alpha and a beta subunit.

It catalyses the reaction a 2-oxocarboxylate + 2 oxidized [2Fe-2S]-[ferredoxin] + CoA = an acyl-CoA + 2 reduced [2Fe-2S]-[ferredoxin] + CO2 + H(+). Its function is as follows. Catalyzes the coenzyme A-dependent oxidative decarboxylation of different 2-oxoacids such as pyruvate, 2-oxobutyrate, glyoxylate and 2-oxoglutarate to form their CoA derivatives. In Aeropyrum pernix (strain ATCC 700893 / DSM 11879 / JCM 9820 / NBRC 100138 / K1), this protein is 2-oxoacid:ferredoxin oxidoreductase 2, subunit alpha.